A 470-amino-acid chain; its full sequence is Neuraminidase (470 aa).

Topologically, residues 1-6 (MNPNQK) are intravirion. A helical membrane pass occupies residues 7–27 (IITIGSICMAIGIISLILQIG). The tract at residues 11–33 (GSICMAIGIISLILQIGNIISIW) is involved in apical transport and lipid raft association. The Virion surface segment spans residues 28–470 (NIISIWVSHS…GAELPFTIDK (443 aa)). A hypervariable stalk region region spans residues 36 to 90 (HSIQTGSQNHTGICNQRIITYENSTWVNQTYVNISNTNVVAGKDTTSMTLAGNSS). Residues Asn44, Asn58, Asn63, Asn68, and Asn88 are each glycosylated (N-linked (GlcNAc...) asparagine; by host). Positions 91-470 (LCPIRGWAIY…GAELPFTIDK (380 aa)) are head of neuraminidase. Disulfide bonds link Cys92-Cys417, Cys124-Cys129, Cys184-Cys231, Cys233-Cys238, Cys279-Cys292, Cys281-Cys290, Cys318-Cys335, and Cys421-Cys447. Arg118 provides a ligand contact to substrate. Asn146 carries N-linked (GlcNAc...) asparagine; by host glycosylation. Asp151 serves as the catalytic Proton donor/acceptor. Substrate is bound at residue Arg152. Asn235 is a glycosylation site (N-linked (GlcNAc...) asparagine; by host). 277–278 (EE) lines the substrate pocket. Position 293 (Arg293) interacts with substrate. The Ca(2+) site is built by Asp294, Gly298, and Asp324. A glycan (N-linked (GlcNAc...) asparagine; by host) is linked at Asn365. Arg368 lines the substrate pocket. Tyr402 serves as the catalytic Nucleophile. Asn455 carries an N-linked (GlcNAc...) asparagine; by host glycan.

The protein belongs to the glycosyl hydrolase 34 family. Homotetramer. Ca(2+) is required as a cofactor. In terms of processing, N-glycosylated.

The protein localises to the virion membrane. It is found in the host apical cell membrane. It catalyses the reaction Hydrolysis of alpha-(2-&gt;3)-, alpha-(2-&gt;6)-, alpha-(2-&gt;8)- glycosidic linkages of terminal sialic acid residues in oligosaccharides, glycoproteins, glycolipids, colominic acid and synthetic substrates.. Its activity is regulated as follows. Inhibited by the neuraminidase inhibitors zanamivir (Relenza) and oseltamivir (Tamiflu). These drugs interfere with the release of progeny virus from infected cells and are effective against all influenza strains. Resistance to neuraminidase inhibitors is quite rare. Catalyzes the removal of terminal sialic acid residues from viral and cellular glycoconjugates. Cleaves off the terminal sialic acids on the glycosylated HA during virus budding to facilitate virus release. Additionally helps virus spread through the circulation by further removing sialic acids from the cell surface. These cleavages prevent self-aggregation and ensure the efficient spread of the progeny virus from cell to cell. Otherwise, infection would be limited to one round of replication. Described as a receptor-destroying enzyme because it cleaves a terminal sialic acid from the cellular receptors. May facilitate viral invasion of the upper airways by cleaving the sialic acid moieties on the mucin of the airway epithelial cells. Likely to plays a role in the budding process through its association with lipid rafts during intracellular transport. May additionally display a raft-association independent effect on budding. Plays a role in the determination of host range restriction on replication and virulence. Sialidase activity in late endosome/lysosome traffic seems to enhance virus replication. The chain is Neuraminidase from Influenza A virus (strain A/Brazil/11/1978 H1N1).